A 78-amino-acid polypeptide reads, in one-letter code: DNA-directed RNA polymerase subunit Rpo5 (78 aa).

Belongs to the archaeal Rpo5/eukaryotic RPB5 RNA polymerase subunit family. Part of the RNA polymerase complex.

Its subcellular location is the cytoplasm. It catalyses the reaction RNA(n) + a ribonucleoside 5'-triphosphate = RNA(n+1) + diphosphate. DNA-dependent RNA polymerase (RNAP) catalyzes the transcription of DNA into RNA using the four ribonucleoside triphosphates as substrates. The chain is DNA-directed RNA polymerase subunit Rpo5 from Methanothrix thermoacetophila (strain DSM 6194 / JCM 14653 / NBRC 101360 / PT) (Methanosaeta thermophila).